The following is a 160-amino-acid chain: MEEGSSSPVSPVDSLGTSEEELERQPKRFGRKRRYSKKSSEDGSPTPGKRGKKGSPSAQSFEELQSQRILANVRERQRTQSLNEAFAALRKIIPTLPSDKLSKIQTLKLAARYIDFLYQVLQSDEMDNKMTSCSYVAHERLSYAFSVWRMEGAWSMSASH.

The interval methionine 1–glutamate 63 is disordered. The segment covering lysine 27–lysine 37 has biased composition (basic residues). A bHLH domain is found at serine 66–leucine 117.

In terms of assembly, efficient DNA binding requires dimerization with another bHLH protein. Forms a heterodimer with TCF3/E12. Also interacts with MEF2C. As to expression, in the embryo, highly expressed in chondrogenic cells. In embryonic skin, expressed in the undifferentiated mesenchymal layer beneath the epidermis which later develops into the dermis. Expressed in early myeloid cells but not in lymphoid cells in the liver. Expression also detected in the secretory ependymal epithelium of the choroid plexus primordium. In the adult, expressed in secreting glandular tissues and tubules.

It localises to the nucleus. Its subcellular location is the cytoplasm. Binds to the E-box consensus sequence 5'-CANNTG-3' as a heterodimer and inhibits transcriptional activation by MYOD1, MYOG, MEF2A and MEF2C. Also represses expression of pro-inflammatory cytokines such as TNFA and IL1B. Involved in postnatal glycogen storage and energy metabolism. Inhibits the premature or ectopic differentiation of preosteoblast cells during osteogenesis, possibly by changing the internal signal transduction response of osteoblasts to external growth factors. This Homo sapiens (Human) protein is Twist-related protein 2 (TWIST2).